The chain runs to 111 residues: Rho GDP-dissociation inhibitor 1 (111 aa).

Residues K57 and K60 each participate in a glycyl lysine isopeptide (Lys-Gly) (interchain with G-Cter in SUMO1); alternate cross-link. Glycyl lysine isopeptide (Lys-Gly) (interchain with G-Cter in SUMO2); alternate cross-links involve residues K57 and K60. K60 carries the N6-acetyllysine; alternate modification. K60 carries the post-translational modification N6-succinyllysine; alternate.

The protein belongs to the Rho GDI family. Monomer. Interacts with FER. Interacts with PLXNB3. Forms a heterodimer with RAC1. Interacts with RHOA, the affinity is increased by three orders of magnitude when RHOA is prenylated. Interacts with PSMD10; the interaction increases ARHGDIA association with RHOA, leading to ARHGDIA-mediated inactivation of RHOA and ROCK and prolonged AKT activation. Interacts with KANK2; the interaction is direct and may regulate the interaction of ARHGDIA with RHOA, RAC1 and CDC42. Interacts with RHOC. Interacts with CDC42. Interacts with NGFR (via death domain); NGFR binding decreases the affinity for RHOA. Post-translationally, the N-terminus is blocked.

The protein resides in the cytoplasm. Functionally, controls Rho proteins homeostasis. Regulates the GDP/GTP exchange reaction of the Rho proteins by inhibiting the dissociation of GDP from them, and the subsequent binding of GTP to them. Retains Rho proteins such as CDC42, RAC1 and RHOA in an inactive cytosolic pool, regulating their stability and protecting them from degradation. Actively involved in the recycling and distribution of activated Rho GTPases in the cell, mediates extraction from membranes of both inactive and activated molecules due its exceptionally high affinity for prenylated forms. Through the modulation of Rho proteins, may play a role in cell motility regulation. In glioma cells, inhibits cell migration and invasion by mediating the signals of SEMA5A and PLXNB3 that lead to inactivation of RAC1. The polypeptide is Rho GDP-dissociation inhibitor 1 (ARHGDIA) (Cavia porcellus (Guinea pig)).